Reading from the N-terminus, the 124-residue chain is Aspartate 1-decarboxylase (124 aa).

The active-site Schiff-base intermediate with substrate; via pyruvic acid is the Ser-25. Ser-25 is subject to Pyruvic acid (Ser). Thr-57 is a substrate binding site. Tyr-58 acts as the Proton donor in catalysis. 73–75 (GAA) lines the substrate pocket.

The protein belongs to the PanD family. As to quaternary structure, heterooctamer of four alpha and four beta subunits. Requires pyruvate as cofactor. Post-translationally, is synthesized initially as an inactive proenzyme, which is activated by self-cleavage at a specific serine bond to produce a beta-subunit with a hydroxyl group at its C-terminus and an alpha-subunit with a pyruvoyl group at its N-terminus.

The protein resides in the cytoplasm. It carries out the reaction L-aspartate + H(+) = beta-alanine + CO2. Its pathway is cofactor biosynthesis; (R)-pantothenate biosynthesis; beta-alanine from L-aspartate: step 1/1. Its function is as follows. Catalyzes the pyruvoyl-dependent decarboxylation of aspartate to produce beta-alanine. The chain is Aspartate 1-decarboxylase from Syntrophobacter fumaroxidans (strain DSM 10017 / MPOB).